A 689-amino-acid polypeptide reads, in one-letter code: Glycine--tRNA ligase beta subunit (689 aa).

Belongs to the class-II aminoacyl-tRNA synthetase family. Tetramer of two alpha and two beta subunits.

It localises to the cytoplasm. The catalysed reaction is tRNA(Gly) + glycine + ATP = glycyl-tRNA(Gly) + AMP + diphosphate. The protein is Glycine--tRNA ligase beta subunit of Oenococcus oeni (strain ATCC BAA-331 / PSU-1).